A 912-amino-acid polypeptide reads, in one-letter code: Glutamate receptor 3.2 (912 aa).

The signal sequence occupies residues 1 to 22; sequence MFWVLVLLSFIVLIGDGMISEG. At 23-587 the chain is on the extracellular side; it reads AGLRPRYVDV…TPWAFLRPFT (565 aa). Asn306, Asn338, Asn378, Asn417, Asn435, Asn445, and Asn532 each carry an N-linked (GlcNAc...) asparagine glycan. Glycine-binding positions include 544 to 546 and Arg551; that span reads DIA. Residues 544–546 and Arg551 each bind L-methionine; that span reads DIA. Residues 588 to 608 form a helical membrane-spanning segment; sequence PPMWAVTAAFFLIVGSVIWIL. The Cytoplasmic segment spans residues 609 to 617; the sequence is EHRINDEFR. A helical membrane pass occupies residues 618–638; that stretch reads GPPRKQIVTILWFSFSTMFFS. The Cytoplasmic portion of the chain corresponds to 639–649; it reads HRENTVSTLGR. A helical membrane pass occupies residues 650-670; sequence AVLLIWLFVVLIITSSYTASL. At 671-828 the chain is on the extracellular side; that stretch reads TSILTVQQLN…EDSEQLKLRS (158 aa). Tyr703 provides a ligand contact to glycine. Tyr703 serves as a coordination point for L-methionine. An N-linked (GlcNAc...) asparagine glycan is attached at Asn734. 743-746 is a binding site for glycine; sequence ERPY. Residue 743–746 participates in L-methionine binding; it reads ERPY. A disulfide bridge links Cys755 with Cys809. Residues Asn808 and Asn813 are each glycosylated (N-linked (GlcNAc...) asparagine). A helical membrane pass occupies residues 829–849; that stretch reads FWGLFLVCGISCFIALFIYFF. Residues 850–912 are Cytoplasmic-facing; sequence KIVRDFFRHG…DLSLKPSRPI (63 aa). The disordered stretch occupies residues 888 to 912; that stretch reads KEDESKRRMKRKRNDDLSLKPSRPI.

Belongs to the glutamate-gated ion channel (TC 1.A.10.1) family. As to quaternary structure, forms a heteromeric channel with GLR3.4. Expressed in leaves and siliques, and at lower level in flowers and roots. Detected in the vascular tissues of both shoots and roots. Expressed in root phloem.

The protein localises to the cell membrane. Functionally, glutamate-gated receptor that probably acts as a non-selective cation channel. May be involved in light-signal transduction and calcium homeostasis via the regulation of calcium influx into cells. Could play a role in calcium unloading from the xylem vessels. Acts as a negative regulator of lateral root initiation and development. May restrict primordia numbers and position along the root axis by a signaling process originating in the phloem. This chain is Glutamate receptor 3.2, found in Arabidopsis thaliana (Mouse-ear cress).